An 886-amino-acid polypeptide reads, in one-letter code: Peptidyl-lysine N-acetyltransferase PatZ (886 aa).

In terms of domain architecture, ATP-grasp spans 487-523 (QPILQAYGMNTLPTWIASDSTEAVHIAEQIGYPVALK). An N-acetyltransferase domain is found at 726–881 (CLFRPILPED…GIVGLTLNLA (156 aa)).

The protein in the N-terminal section; belongs to the acetate CoA ligase alpha subunit family. It in the central section; belongs to the acetate CoA ligase beta subunit family. In terms of assembly, stable tetramer in solution. Oligomerizes to an octameric form by autoacetylation. Post-translationally, autoacetylated. Deacetylated by CobB.

The catalysed reaction is L-lysyl-[protein] + acetyl-CoA = N(6)-acetyl-L-lysyl-[protein] + CoA + H(+). In terms of biological role, catalyzes the acetyl-CoA-dependent acetylation of lysine residues of a large number of target proteins. Acetylates RNase R in exponential phase cells and RNase II. Required for the glucose-dependent acetylation on multiple lysines of alpha, beta and beta' RNAP subunits. Also acetylates acetyl-coenzyme A synthetase (Acs) and the chromosomal replication initiator protein DnaA, and inhibits their activity. Overexpression leads to the acetylation of a large number of additional proteins and inhibits motility. In Escherichia coli (strain K12), this protein is Peptidyl-lysine N-acetyltransferase PatZ.